The primary structure comprises 222 residues: Superoxide dismutase [Cu-Zn], chloroplastic (222 aa).

The N-terminal 68 residues, 1–68 (MAAHTILASA…AASKPLTIVA (68 aa)), are a transit peptide targeting the chloroplast. Residues His-114, His-116, and His-131 each contribute to the Cu cation site. A disulfide bridge links Cys-125 with Cys-214. His-131, His-139, His-148, and Asp-151 together coordinate Zn(2+). Position 188 (His-188) interacts with Cu cation.

The protein belongs to the Cu-Zn superoxide dismutase family. In terms of assembly, homotetramer. Cu cation serves as cofactor. It depends on Zn(2+) as a cofactor.

The protein resides in the plastid. It localises to the chloroplast. It catalyses the reaction 2 superoxide + 2 H(+) = H2O2 + O2. Functionally, destroys radicals which are normally produced within the cells and which are toxic to biological systems. The polypeptide is Superoxide dismutase [Cu-Zn], chloroplastic (SODCP) (Spinacia oleracea (Spinach)).